Reading from the N-terminus, the 286-residue chain is MPAQIIDGKTIAATVRQAVKQQVKERIDSGLRAPGLAVVLVGSDAASEVYVGNKRRACEDVGFRSFDYDLPITTTQKELEKLIEELNDDDAVDGILVQLPLPAGLDATPILERIRPDKDVDGFHPFNIGRLSQRIPALRPCTPKGIMTLLEHTHVDLHGLNAVVVGASNIVGRPMSLELLLAGATTTVCHRFTKDLSDHVKRADIVVVAVGKAEFIPGEWIKPGAIVIDVGMNRLPDGRLTGDVEFSVAAERAGWITPVPGGVGPMTVASLIENTLQACVDYHDVR.

166–168 contributes to the NADP(+) binding site; that stretch reads GAS.

Belongs to the tetrahydrofolate dehydrogenase/cyclohydrolase family. Homodimer.

The enzyme catalyses (6R)-5,10-methylene-5,6,7,8-tetrahydrofolate + NADP(+) = (6R)-5,10-methenyltetrahydrofolate + NADPH. It catalyses the reaction (6R)-5,10-methenyltetrahydrofolate + H2O = (6R)-10-formyltetrahydrofolate + H(+). The protein operates within one-carbon metabolism; tetrahydrofolate interconversion. In terms of biological role, catalyzes the oxidation of 5,10-methylenetetrahydrofolate to 5,10-methenyltetrahydrofolate and then the hydrolysis of 5,10-methenyltetrahydrofolate to 10-formyltetrahydrofolate. The chain is Bifunctional protein FolD from Idiomarina loihiensis (strain ATCC BAA-735 / DSM 15497 / L2-TR).